We begin with the raw amino-acid sequence, 224 residues long: ATP phosphoribosyltransferase (224 aa).

It belongs to the ATP phosphoribosyltransferase family. Short subfamily. In terms of assembly, heteromultimer composed of HisG and HisZ subunits.

Its subcellular location is the cytoplasm. The enzyme catalyses 1-(5-phospho-beta-D-ribosyl)-ATP + diphosphate = 5-phospho-alpha-D-ribose 1-diphosphate + ATP. The protein operates within amino-acid biosynthesis; L-histidine biosynthesis; L-histidine from 5-phospho-alpha-D-ribose 1-diphosphate: step 1/9. Functionally, catalyzes the condensation of ATP and 5-phosphoribose 1-diphosphate to form N'-(5'-phosphoribosyl)-ATP (PR-ATP). Has a crucial role in the pathway because the rate of histidine biosynthesis seems to be controlled primarily by regulation of HisG enzymatic activity. The sequence is that of ATP phosphoribosyltransferase from Cupriavidus metallidurans (strain ATCC 43123 / DSM 2839 / NBRC 102507 / CH34) (Ralstonia metallidurans).